A 236-amino-acid chain; its full sequence is Phosphoribosylaminoimidazole-succinocarboxamide synthase (236 aa).

This sequence belongs to the SAICAR synthetase family.

The catalysed reaction is 5-amino-1-(5-phospho-D-ribosyl)imidazole-4-carboxylate + L-aspartate + ATP = (2S)-2-[5-amino-1-(5-phospho-beta-D-ribosyl)imidazole-4-carboxamido]succinate + ADP + phosphate + 2 H(+). The protein operates within purine metabolism; IMP biosynthesis via de novo pathway; 5-amino-1-(5-phospho-D-ribosyl)imidazole-4-carboxamide from 5-amino-1-(5-phospho-D-ribosyl)imidazole-4-carboxylate: step 1/2. In Hahella chejuensis (strain KCTC 2396), this protein is Phosphoribosylaminoimidazole-succinocarboxamide synthase.